Consider the following 123-residue polypeptide: KQFTKCELSQNLYDIDGYGRIALPELICTMFHTSGYDTQAIVENNESTEYGLFQISNALWCKSSQSPQSRNICDITCDKFLDDDITDDIMCAKKILDIKGIDYWIAHKALCTEKLEQWLCEKE.

A C-type lysozyme domain is found at 1 to 123 (KQFTKCELSQ…KLEQWLCEKE (123 aa)). Intrachain disulfides connect cysteine 6–cysteine 120, cysteine 28–cysteine 111, cysteine 61–cysteine 77, and cysteine 73–cysteine 91. An N-linked (GlcNAc...) asparagine glycan is attached at asparagine 45. 5 residues coordinate Ca(2+): lysine 79, aspartate 82, aspartate 84, aspartate 87, and aspartate 88.

This sequence belongs to the glycosyl hydrolase 22 family. In terms of assembly, lactose synthase (LS) is a heterodimer of a catalytic component, beta1,4-galactosyltransferase (beta4Gal-T1) and a regulatory component, alpha-lactalbumin (LA). In terms of tissue distribution, mammary gland specific. Secreted in milk.

It localises to the secreted. Regulatory subunit of lactose synthase, changes the substrate specificity of galactosyltransferase in the mammary gland making glucose a good acceptor substrate for this enzyme. This enables LS to synthesize lactose, the major carbohydrate component of milk. In other tissues, galactosyltransferase transfers galactose onto the N-acetylglucosamine of the oligosaccharide chains in glycoproteins. The protein is Alpha-lactalbumin (LALBA) of Papio cynocephalus (Yellow baboon).